We begin with the raw amino-acid sequence, 186 residues long: M-phase phosphoprotein 6 homolog (186 aa).

At serine 2 the chain carries N-acetylserine. 2 disordered regions span residues 22–47 (KFGKTDDEESSNSNTPSNINSDVEPI) and 95–186 (SNVG…NSKK). Low complexity predominate over residues 32 to 42 (SNSNTPSNINS). At serine 42 the chain carries Phosphoserine. Over residues 122–147 (SGSRKRKFDEGEQNEDEKRDAKDKEF) the composition is skewed to basic and acidic residues. At serine 150 the chain carries Phosphoserine. Basic residues predominate over residues 168–186 (IKKKKTNHNGKNKNRNSKK).

It belongs to the MPP6 family. As to quaternary structure, associates with the RNA exosome complex.

The protein resides in the nucleus. RNA-binding protein that associates with the RNA exosome complex. Involved in surveillance of pre-rRNAs and pre-mRNAs, and the degradation of cryptic non-coding RNAs (ncRNA) derived from intergenic regions and the ribosomal DNA spacer heterochromatin. The protein is M-phase phosphoprotein 6 homolog (MPP6) of Saccharomyces cerevisiae (strain ATCC 204508 / S288c) (Baker's yeast).